The sequence spans 827 residues: Glycerol-3-phosphate acyltransferase (827 aa).

The short motif at 325 to 330 (CHRSHM) is the HXXXXD motif element.

It belongs to the GPAT/DAPAT family.

The protein resides in the cell inner membrane. The catalysed reaction is sn-glycerol 3-phosphate + an acyl-CoA = a 1-acyl-sn-glycero-3-phosphate + CoA. It functions in the pathway phospholipid metabolism; CDP-diacylglycerol biosynthesis; CDP-diacylglycerol from sn-glycerol 3-phosphate: step 1/3. This is Glycerol-3-phosphate acyltransferase from Shigella sonnei (strain Ss046).